The following is a 232-amino-acid chain: Homeobox protein SAX-1 (232 aa).

3 disordered regions span residues Cys-1–Lys-64, Lys-122–Ala-150, and Leu-185–Ser-208. The homeobox DNA-binding region spans Pro-65 to His-124. Residues Gly-126 to Ser-142 are compositionally biased toward low complexity.

Belongs to the NK-1 homeobox family. As to expression, transiently expressed in the birth zone of the whole spinal cord regardless of the axial level.

The protein resides in the nucleus. In Gallus gallus (Chicken), this protein is Homeobox protein SAX-1 (SAX1).